An 88-amino-acid chain; its full sequence is Small ribosomal subunit protein uS15 (88 aa).

Belongs to the universal ribosomal protein uS15 family. As to quaternary structure, part of the 30S ribosomal subunit. Forms a bridge to the 50S subunit in the 70S ribosome, contacting the 23S rRNA.

In terms of biological role, one of the primary rRNA binding proteins, it binds directly to 16S rRNA where it helps nucleate assembly of the platform of the 30S subunit by binding and bridging several RNA helices of the 16S rRNA. Its function is as follows. Forms an intersubunit bridge (bridge B4) with the 23S rRNA of the 50S subunit in the ribosome. The chain is Small ribosomal subunit protein uS15 from Mesomycoplasma flocculare (Mycoplasma flocculare).